Reading from the N-terminus, the 70-residue chain is Small ribosomal subunit protein bS21 (70 aa).

The protein belongs to the bacterial ribosomal protein bS21 family.

In Cupriavidus pinatubonensis (strain JMP 134 / LMG 1197) (Cupriavidus necator (strain JMP 134)), this protein is Small ribosomal subunit protein bS21.